The chain runs to 438 residues: Serine--tRNA ligase (438 aa).

245-247 (TAE) provides a ligand contact to L-serine. 276 to 278 (RSE) serves as a coordination point for ATP. An L-serine-binding site is contributed by Glu299. Residue 363-366 (EISS) coordinates ATP. Position 398 (Ser398) interacts with L-serine.

It belongs to the class-II aminoacyl-tRNA synthetase family. Type-1 seryl-tRNA synthetase subfamily. Homodimer. The tRNA molecule binds across the dimer.

The protein resides in the cytoplasm. The catalysed reaction is tRNA(Ser) + L-serine + ATP = L-seryl-tRNA(Ser) + AMP + diphosphate + H(+). It carries out the reaction tRNA(Sec) + L-serine + ATP = L-seryl-tRNA(Sec) + AMP + diphosphate + H(+). It participates in aminoacyl-tRNA biosynthesis; selenocysteinyl-tRNA(Sec) biosynthesis; L-seryl-tRNA(Sec) from L-serine and tRNA(Sec): step 1/1. Functionally, catalyzes the attachment of serine to tRNA(Ser). Is also able to aminoacylate tRNA(Sec) with serine, to form the misacylated tRNA L-seryl-tRNA(Sec), which will be further converted into selenocysteinyl-tRNA(Sec). This is Serine--tRNA ligase from Delftia acidovorans (strain DSM 14801 / SPH-1).